The sequence spans 238 residues: Probable transcriptional regulatory protein Mmwyl1_2868 (238 aa).

Belongs to the TACO1 family.

The protein resides in the cytoplasm. The chain is Probable transcriptional regulatory protein Mmwyl1_2868 from Marinomonas sp. (strain MWYL1).